Here is a 320-residue protein sequence, read N- to C-terminus: Citrate synthase (320 aa).

Residues H249 and D307 contribute to the active site.

The protein belongs to the citrate synthase family.

It catalyses the reaction oxaloacetate + acetyl-CoA + H2O = citrate + CoA + H(+). The protein operates within carbohydrate metabolism; tricarboxylic acid cycle; isocitrate from oxaloacetate: step 1/2. In Bartonella doshiae, this protein is Citrate synthase (gltA).